The chain runs to 156 residues: Small ribosomal subunit protein uS7c (156 aa).

Belongs to the universal ribosomal protein uS7 family. In terms of assembly, part of the 30S ribosomal subunit.

The protein localises to the plastid. It localises to the chloroplast. Functionally, one of the primary rRNA binding proteins, it binds directly to 16S rRNA where it nucleates assembly of the head domain of the 30S subunit. The protein is Small ribosomal subunit protein uS7c (rps7) of Gracilaria tenuistipitata var. liui (Red alga).